Here is a 323-residue protein sequence, read N- to C-terminus: MNNLFSILHNTPLFQEGTIEFYKPLKPLTSYKIGGPAEALFCPKDEDHLKEALIFLSKNKISASLIGGGTNILVSDKGFRGVLISLKNLNKIEIIGESENKVFVRAGAGVLTDKLTKWAVENSLSGLECFGGLPGSVGGAVFMNARCYDVSISDRLKSIKYILADGDKTEFAEYEYNPSDWDYKASPFQQNPVSTEITKNRKIVLSAVFTLTHGIKEEIAVKTEEKVQDRISKGHFKEPSAGSTFKNNRAFGLPSGKLIEDAGLKGLCEGGAQVAPWHGNFIINKHDASASDIKTLIEKVQKTVKDKTGFLLEPEVIFAGDWG.

Residues 33 to 214 (IGGPAEALFC…LSAVFTLTHG (182 aa)) form the FAD-binding PCMH-type domain. The active-site Proton donor is the Ser-243. Residue Glu-315 is part of the active site.

This sequence belongs to the MurB family. Requires FAD as cofactor.

It localises to the cytoplasm. The catalysed reaction is UDP-N-acetyl-alpha-D-muramate + NADP(+) = UDP-N-acetyl-3-O-(1-carboxyvinyl)-alpha-D-glucosamine + NADPH + H(+). It participates in cell wall biogenesis; peptidoglycan biosynthesis. Its function is as follows. Cell wall formation. The sequence is that of UDP-N-acetylenolpyruvoylglucosamine reductase from Treponema denticola (strain ATCC 35405 / DSM 14222 / CIP 103919 / JCM 8153 / KCTC 15104).